Here is a 702-residue protein sequence, read N- to C-terminus: Ferrioxamine B receptor (702 aa).

A signal peptide spans 1–30 (MPLEMFMFATTRMALLIGGAIGGATFPLFA). Positions 55–168 (PDIETPQSVS…PGGIVALTSR (114 aa)) constitute a TBDR plug domain. One can recognise a TBDR beta-barrel domain in the interval 173 to 702 (DAGGEVKLFA…SIVGSVSWAF (530 aa)).

The protein belongs to the TonB-dependent receptor family.

The protein resides in the cell outer membrane. Its function is as follows. Ferrioxamine binding and uptake, in association with the TonB protein. May play a role in intestinal colonization. This Salmonella typhimurium (strain SL1344) protein is Ferrioxamine B receptor (foxA).